The primary structure comprises 815 residues: Ataxin-1 (815 aa).

The span at 1–41 shows a compositional bias: basic and acidic residues; the sequence is MKSNQERSNECLPPKKREIPATSRSSEEKAPTLPSDNHRVE. The disordered stretch occupies residues 1–63; sequence MKSNQERSNE…GHGGGRHGPA (63 aa). K16 is covalently cross-linked (Glycyl lysine isopeptide (Lys-Gly) (interchain with G-Cter in SUMO)). Residues 49–61 are compositionally biased toward gly residues; the sequence is NPGGRGHGGGRHG. Phosphoserine is present on residues S82 and S88. Disordered stretches follow at residues 185 to 270, 329 to 355, and 397 to 424; these read GSLS…PVHL, EKSRRYGAPSSADLGLGKAGGKSVPHP, and VQQATHREASPSTLNDKSGLHLGKPGHR. Residue K194 forms a Glycyl lysine isopeptide (Lys-Gly) (interchain with G-Cter in SUMO) linkage. Low complexity predominate over residues 197–226; sequence QQQQQQQQQQQQHQHQQQQQQQQQQQQQQH. A phosphoserine mark is found at S238 and S253. Positions 243-260 are enriched in polar residues; that stretch reads QQNQYVHISSSPQNTGRT. The tract at residues 494-604 is self-association; that stretch reads VGSTDMEASG…TEDFIQSAEI (111 aa). Residues 538 to 815 form an interaction with USP7 region; that stretch reads LVTQAAYPAM…CIEGRSNVGK (278 aa). The interval 540–766 is RNA-binding; sequence TQAAYPAMVQ…FLTKIEPSKP (227 aa). The region spanning 562-693 is the AXH domain; that stretch reads SPAAAPPTLP…SLTLKNLKNG (132 aa). Residues K609, K696, and K745 each participate in a glycyl lysine isopeptide (Lys-Gly) (interchain with G-Cter in SUMO) cross-link. The segment at 762–798 is disordered; the sequence is EPSKPAATRKRRWSAPESRKLEKSEDEPPLTLPKPSL. S775 is modified (phosphoserine). A Nuclear localization signal motif is present at residues 794–797; it reads PKPS.

It belongs to the ATXN1 family. As to quaternary structure, homooligomer. Interacts with CIC. Interacts with ANP32A, PQBP1, UBQLN4, ATXN1L and USP7. Directly interacts with RBPJ; this interaction is disrupted in the presence of Notch intracellular domain. Competes with ATXN1L for RBPJ-binding. Found in a complex with CIC and ATXN1L. Ubiquitinated by UBE3A, leading to its degradation by the proteasome. The presence of expanded poly-Gln repeats in spinocerebellar ataxia 1 (SCA1) patients impairs ubiquitination and degradation, leading to accumulation of ATXN1 in neurons and subsequent toxicity. In terms of processing, phosphorylation at Ser-775 increases the pathogenicity of proteins with an expanded polyglutamine tract. Post-translationally, sumoylation is dependent on nuclear localization and phosphorylation at Ser-775. It is reduced in the presence of an expanded polyglutamine tract. In terms of tissue distribution, widely expressed throughout the body.

The protein localises to the cytoplasm. Its subcellular location is the nucleus. Its function is as follows. Chromatin-binding factor that repress Notch signaling in the absence of Notch intracellular domain by acting as a CBF1 corepressor. Binds to the HEY promoter and might assist, along with NCOR2, RBPJ-mediated repression. Binds RNA in vitro. May be involved in RNA metabolism. In concert with CIC and ATXN1L, involved in brain development. The polypeptide is Ataxin-1 (ATXN1) (Homo sapiens (Human)).